The primary structure comprises 742 residues: Glucosylceramidase (742 aa).

Asn-37 and Asn-160 each carry an N-linked (GlcNAc...) asparagine glycan. Residue Glu-258 is the Proton donor of the active site. A glycan (N-linked (GlcNAc...) asparagine) is linked at Asn-388. Glu-492 acts as the Nucleophile in catalysis. Asn-552, Asn-560, and Asn-698 each carry an N-linked (GlcNAc...) asparagine glycan. The helical transmembrane segment at 701-721 (IAQILVAVVILLLGVLVAYYA) threads the bilayer.

The protein belongs to the glycosyl hydrolase 5 (cellulase A) family.

The protein resides in the membrane. It carries out the reaction a beta-D-glucosyl-(1&lt;-&gt;1')-N-acylsphing-4-enine + H2O = an N-acylsphing-4-enine + D-glucose. Its function is as follows. Specifically hydrolyzes the glucosidic linkage in glucosylceramide. May prevent accumulation of aberrent glucosylceramide containing immature ceramide. The chain is Glucosylceramidase from Cryptococcus neoformans var. grubii serotype A (strain H99 / ATCC 208821 / CBS 10515 / FGSC 9487) (Filobasidiella neoformans var. grubii).